Consider the following 344-residue polypeptide: UDP-3-O-acylglucosamine N-acyltransferase (344 aa).

The Proton acceptor role is filled by His250.

Belongs to the transferase hexapeptide repeat family. LpxD subfamily. Homotrimer.

The catalysed reaction is a UDP-3-O-[(3R)-3-hydroxyacyl]-alpha-D-glucosamine + a (3R)-hydroxyacyl-[ACP] = a UDP-2-N,3-O-bis[(3R)-3-hydroxyacyl]-alpha-D-glucosamine + holo-[ACP] + H(+). It functions in the pathway bacterial outer membrane biogenesis; LPS lipid A biosynthesis. Functionally, catalyzes the N-acylation of UDP-3-O-acylglucosamine using 3-hydroxyacyl-ACP as the acyl donor. Is involved in the biosynthesis of lipid A, a phosphorylated glycolipid that anchors the lipopolysaccharide to the outer membrane of the cell. This Maricaulis maris (strain MCS10) (Caulobacter maris) protein is UDP-3-O-acylglucosamine N-acyltransferase.